Consider the following 749-residue polypeptide: Dynamin-1-like protein (749 aa).

M1 carries the post-translational modification N-acetylmethionine. In terms of domain architecture, Dynamin-type G spans 22 to 315; sequence IIQLPQIVVV…LMHHIRDCLP (294 aa). Residues 32–39 are G1 motif; that stretch reads GTQSSGKS. GTP is bound at residue 32–40; sequence GTQSSGKSS. Residues 58-60 are G2 motif; that stretch reads VTR. The interval 74–93 is disordered; it reads DKRKTTGEENDPATWKNSRH. The segment at 159-162 is G3 motif; it reads DLPG. The segment at 228–231 is G4 motif; sequence TKLD. GTP is bound by residues 228 to 234 and 259 to 262; these read TKLDLMD and NRSQ. The tract at residues 258-261 is G5 motif; sequence VNRS. The tract at residues 357–502 is middle domain; that stretch reads YCNTIEGTAK…NEMVHNLVAI (146 aa). Residues 461 to 698 form an interaction with GSK3B region; the sequence is NYSTQELLRF…NHVKDTLQSE (238 aa). Residues 515–582 are b domain; sequence ADACGLMNNN…IQESRRETKN (68 aa). The segment at 536–604 is disordered; that stretch reads ELPSAVSRDK…QEPTTGNWRG (69 aa). Phosphoserine is present on S542. Glycyl lysine isopeptide (Lys-Gly) (interchain with G-Cter in SUMO) cross-links involve residues K545 and K548. Over residues 550–567 the composition is skewed to low complexity; sequence PSALAPASQEPSPAASAE. A Phosphoserine modification is found at S561. Residues 568–581 show a composition bias toward basic and acidic residues; sequence ADGKLIQESRRETK. Residues K571 and K581 each participate in a glycyl lysine isopeptide (Lys-Gly) (interchain with G-Cter in SUMO) cross-link. Residues T598 and T599 are each glycosylated (O-linked (GlcNAc) threonine). A Glycyl lysine isopeptide (Lys-Gly) (interchain with G-Cter in SUMO) cross-link involves residue K607. K610 carries the post-translational modification N6-acetyllysine; alternate. Residue K610 forms a Glycyl lysine isopeptide (Lys-Gly) (interchain with G-Cter in SUMO); alternate linkage. Residue K619 forms a Glycyl lysine isopeptide (Lys-Gly) (interchain with G-Cter in SUMO) linkage. A Phosphoserine modification is found at S620. K621 participates in a covalent cross-link: Glycyl lysine isopeptide (Lys-Gly) (interchain with G-Cter in SUMO). S629 carries the post-translational modification Phosphoserine; by CDK1 and PINK1. S650 carries the phosphoserine; by CAMK1 and PKA modification. C657 is modified (S-nitrosocysteine). A GED domain is found at 657 to 748; the sequence is CEVIERLIKS…IIAEIRETHL (92 aa). The segment at 667-681 is important for homodimerization; it reads YFLIVRKNIQDSVPK.

It belongs to the TRAFAC class dynamin-like GTPase superfamily. Dynamin/Fzo/YdjA family. Homotetramer; dimerizes through the N-terminal GTP-middle region of one molecule binding to the GED domain of another DNM1L molecule. Oligomerizes in a GTP-dependent manner to form membrane-associated tubules with a spiral pattern. Interacts with GSK3B and MARCHF5. Interacts (via the GTPase and B domains) with UBE2I; the interaction promotes sumoylation of DNM1L, mainly in its B domain. Interacts with PPP3CA; the interaction dephosphorylates DNM1L and regulates its transition to mitochondria. Interacts with BCL2L1 isoform BCL-X(L) and CLTA; DNM1L and BCL2L1 isoform BCL-X(L) may form a complex in synaptic vesicles that also contains clathrin and MFF. Interacts with MFF; the interaction is inhinited by C11orf65/MFI. Interacts with FIS1. Interacts with MIEF2 and MIEF1; GTP-dependent, regulates GTP hydrolysis and DNM1L oligomerization. Interacts with PGAM5; this interaction leads to dephosphorylation at Ser-656 and activation of GTPase activity and eventually to mitochondria fragmentation. Interacts with RALBP1; during mitosis, recruits DNM1L to the mitochondrion and mediates its activation by the mitotic kinase cyclin B-CDK1. Post-translationally, phosphorylation/dephosphorylation events on two sites near the GED domain regulate mitochondrial fission. Phosphorylation on Ser-650 by CAMK1 and PKA inhibits the GTPase activity, leading to a defect in mitochondrial fission promoting mitochondrial elongation. Dephosphorylated on this site by PPP3CA which promotes mitochondrial fission. Phosphorylation on Ser-629 by CDK1 and PINK1 activates the GTPase activity and promotes mitochondrial fission. Phosphorylated in a circadian manner at Ser-650. Sumoylated on various lysine residues within the B domain, probably by MUL1. Sumoylation positively regulates mitochondrial fission. Desumoylated by SENP5 during G2/M transition of mitosis. Appears to be linked to its catalytic activity. In terms of processing, S-nitrosylation increases DNM1L dimerization, mitochondrial fission and causes neuronal damage. Post-translationally, O-GlcNAcylation augments the level of the GTP-bound active form of DNM1L and induces translocation from the cytoplasm to mitochondria in cardiomyocytes. It also decreases phosphorylation at Ser-650. Ubiquitination by MARCHF5 affects mitochondrial morphology.

It localises to the cytoplasm. The protein localises to the cytosol. Its subcellular location is the golgi apparatus. It is found in the endomembrane system. The protein resides in the mitochondrion outer membrane. It localises to the peroxisome. The protein localises to the membrane. Its subcellular location is the clathrin-coated pit. It is found in the cytoplasmic vesicle. The protein resides in the secretory vesicle. It localises to the synaptic vesicle membrane. The catalysed reaction is GTP + H2O = GDP + phosphate + H(+). Functions in mitochondrial and peroxisomal division. Mediates membrane fission through oligomerization into membrane-associated tubular structures that wrap around the scission site to constrict and sever the mitochondrial membrane through a GTP hydrolysis-dependent mechanism. The specific recruitment at scission sites is mediated by membrane receptors like MFF, MIEF1 and MIEF2 for mitochondrial membranes. While the recruitment by the membrane receptors is GTP-dependent, the following hydrolysis of GTP induces the dissociation from the receptors and allows DNM1L filaments to curl into closed rings that are probably sufficient to sever a double membrane. Acts downstream of PINK1 to promote mitochondrial fission in a PRKN-dependent manner. Plays an important role in mitochondrial fission during mitosis. Through its function in mitochondrial division, ensures the survival of at least some types of postmitotic neurons, including Purkinje cells, by suppressing oxidative damage. Required for normal brain development, including that of cerebellum. Facilitates developmentally regulated apoptosis during neural tube formation. Required for a normal rate of cytochrome c release and caspase activation during apoptosis; this requirement may depend upon the cell type and the physiological apoptotic cues. Required for formation of endocytic vesicles. Proposed to regulate synaptic vesicle membrane dynamics through association with BCL2L1 isoform Bcl-X(L) which stimulates its GTPase activity in synaptic vesicles; the function may require its recruitment by MFF to clathrin-containing vesicles. Required for programmed necrosis execution. Rhythmic control of its activity following phosphorylation at Ser-650 is essential for the circadian control of mitochondrial ATP production. The chain is Dynamin-1-like protein from Bos taurus (Bovine).